The following is a 748-amino-acid chain: Phosphoenolpyruvate-dependent phosphotransferase system (748 aa).

The GAF domain maps to 1–127; that stretch reads MLTRLREIVE…RRQLLGVLVV (127 aa). Positions 128 to 170 are linker; the sequence is QQRELRQYDESEESFLVTLATQMAAILSQSQLTALFGQYRQTR. Positions 171–748 are PTS EI; it reads IRALPAAPGV…GMGGLIRGGL (578 aa). The active-site Tele-phosphohistidine intermediate is the His356. Residues Arg462 and Arg498 each contribute to the phosphoenolpyruvate site. Positions 597 and 621 each coordinate Mg(2+). Phosphoenolpyruvate-binding positions include 620-621 and Arg631; that span reads ND. Cys668 serves as the catalytic Proton donor.

This sequence belongs to the PEP-utilizing enzyme family. The cofactor is Mg(2+).

It is found in the cytoplasm. It carries out the reaction L-histidyl-[protein] + phosphoenolpyruvate = N(pros)-phospho-L-histidyl-[protein] + pyruvate. Its activity is regulated as follows. Inhibited by GDP and FAD. In terms of biological role, component of the phosphoenolpyruvate-dependent nitrogen-metabolic phosphotransferase system (nitrogen-metabolic PTS), that seems to be involved in regulating nitrogen metabolism. Enzyme I-Ntr transfers the phosphoryl group from phosphoenolpyruvate (PEP) to the phosphoryl carrier protein (NPr). Could function in the transcriptional regulation of sigma-54 dependent operons in conjunction with the NPr (PtsO) and EIIA-Ntr (PtsN) proteins. Enzyme I-Ntr is specific for NPr. The chain is Phosphoenolpyruvate-dependent phosphotransferase system (ptsP) from Escherichia coli (strain K12).